We begin with the raw amino-acid sequence, 393 residues long: Lipoyl synthase, mitochondrial (393 aa).

[4Fe-4S] cluster contacts are provided by C115, C120, C126, C146, C150, C153, and S362. Positions 131–351 (ETGTATATIM…RILGMDMGFR (221 aa)) constitute a Radical SAM core domain.

It belongs to the radical SAM superfamily. Lipoyl synthase family. Requires [4Fe-4S] cluster as cofactor.

It is found in the mitochondrion. It catalyses the reaction [[Fe-S] cluster scaffold protein carrying a second [4Fe-4S](2+) cluster] + N(6)-octanoyl-L-lysyl-[protein] + 2 oxidized [2Fe-2S]-[ferredoxin] + 2 S-adenosyl-L-methionine + 4 H(+) = [[Fe-S] cluster scaffold protein] + N(6)-[(R)-dihydrolipoyl]-L-lysyl-[protein] + 4 Fe(3+) + 2 hydrogen sulfide + 2 5'-deoxyadenosine + 2 L-methionine + 2 reduced [2Fe-2S]-[ferredoxin]. It functions in the pathway protein modification; protein lipoylation via endogenous pathway; protein N(6)-(lipoyl)lysine from octanoyl-[acyl-carrier-protein]: step 2/2. Catalyzes the radical-mediated insertion of two sulfur atoms into the C-6 and C-8 positions of the octanoyl moiety bound to the lipoyl domains of lipoate-dependent enzymes, thereby converting the octanoylated domains into lipoylated derivatives. The chain is Lipoyl synthase, mitochondrial from Vitis vinifera (Grape).